The primary structure comprises 116 residues: Large ribosomal subunit protein bL19 (116 aa).

The protein belongs to the bacterial ribosomal protein bL19 family.

Functionally, this protein is located at the 30S-50S ribosomal subunit interface and may play a role in the structure and function of the aminoacyl-tRNA binding site. The polypeptide is Large ribosomal subunit protein bL19 (Stutzerimonas stutzeri (strain A1501) (Pseudomonas stutzeri)).